The primary structure comprises 619 residues: 1-deoxy-D-xylulose-5-phosphate synthase (619 aa).

Thiamine diphosphate-binding positions include His-74 and 115-117 (GHS). Asp-146 lines the Mg(2+) pocket. Thiamine diphosphate is bound by residues 147–148 (GA), Asn-175, Tyr-285, and Glu-365. Asn-175 is a binding site for Mg(2+).

This sequence belongs to the transketolase family. DXPS subfamily. Homodimer. It depends on Mg(2+) as a cofactor. Requires thiamine diphosphate as cofactor.

It catalyses the reaction D-glyceraldehyde 3-phosphate + pyruvate + H(+) = 1-deoxy-D-xylulose 5-phosphate + CO2. Its pathway is metabolic intermediate biosynthesis; 1-deoxy-D-xylulose 5-phosphate biosynthesis; 1-deoxy-D-xylulose 5-phosphate from D-glyceraldehyde 3-phosphate and pyruvate: step 1/1. Catalyzes the acyloin condensation reaction between C atoms 2 and 3 of pyruvate and glyceraldehyde 3-phosphate to yield 1-deoxy-D-xylulose-5-phosphate (DXP). The chain is 1-deoxy-D-xylulose-5-phosphate synthase from Clostridium acetobutylicum (strain ATCC 824 / DSM 792 / JCM 1419 / IAM 19013 / LMG 5710 / NBRC 13948 / NRRL B-527 / VKM B-1787 / 2291 / W).